We begin with the raw amino-acid sequence, 314 residues long: Methionyl-tRNA formyltransferase (314 aa).

110–113 (SLLP) provides a ligand contact to (6S)-5,6,7,8-tetrahydrofolate.

The protein belongs to the Fmt family.

The catalysed reaction is L-methionyl-tRNA(fMet) + (6R)-10-formyltetrahydrofolate = N-formyl-L-methionyl-tRNA(fMet) + (6S)-5,6,7,8-tetrahydrofolate + H(+). In terms of biological role, attaches a formyl group to the free amino group of methionyl-tRNA(fMet). The formyl group appears to play a dual role in the initiator identity of N-formylmethionyl-tRNA by promoting its recognition by IF2 and preventing the misappropriation of this tRNA by the elongation apparatus. The protein is Methionyl-tRNA formyltransferase of Bacillus cereus (strain B4264).